Here is a 333-residue protein sequence, read N- to C-terminus: uncharacterized protein (333 aa).

To E.coli YfeH.

This is an uncharacterized protein from Pseudomonas aeruginosa (strain ATCC 15692 / DSM 22644 / CIP 104116 / JCM 14847 / LMG 12228 / 1C / PRS 101 / PAO1).